We begin with the raw amino-acid sequence, 128 residues long: Large ribosomal subunit protein uL22 (128 aa).

Belongs to the universal ribosomal protein uL22 family. In terms of assembly, part of the 50S ribosomal subunit.

Functionally, this protein binds specifically to 23S rRNA; its binding is stimulated by other ribosomal proteins, e.g. L4, L17, and L20. It is important during the early stages of 50S assembly. It makes multiple contacts with different domains of the 23S rRNA in the assembled 50S subunit and ribosome. Its function is as follows. The globular domain of the protein is located near the polypeptide exit tunnel on the outside of the subunit, while an extended beta-hairpin is found that lines the wall of the exit tunnel in the center of the 70S ribosome. This chain is Large ribosomal subunit protein uL22, found in Methylocella silvestris (strain DSM 15510 / CIP 108128 / LMG 27833 / NCIMB 13906 / BL2).